Consider the following 245-residue polypeptide: 1-(5-phosphoribosyl)-5-[(5-phosphoribosylamino)methylideneamino] imidazole-4-carboxamide isomerase (245 aa).

Catalysis depends on Asp7, which acts as the Proton acceptor. The active-site Proton donor is Asp129.

The protein belongs to the HisA/HisF family.

It localises to the cytoplasm. The enzyme catalyses 1-(5-phospho-beta-D-ribosyl)-5-[(5-phospho-beta-D-ribosylamino)methylideneamino]imidazole-4-carboxamide = 5-[(5-phospho-1-deoxy-D-ribulos-1-ylimino)methylamino]-1-(5-phospho-beta-D-ribosyl)imidazole-4-carboxamide. It functions in the pathway amino-acid biosynthesis; L-histidine biosynthesis; L-histidine from 5-phospho-alpha-D-ribose 1-diphosphate: step 4/9. The sequence is that of 1-(5-phosphoribosyl)-5-[(5-phosphoribosylamino)methylideneamino] imidazole-4-carboxamide isomerase from Citrobacter koseri (strain ATCC BAA-895 / CDC 4225-83 / SGSC4696).